A 1022-amino-acid chain; its full sequence is Antigenic heat-stable 120 kDa protein (1022 aa).

Disordered stretches follow at residues 1-41 (MSKD…QTTT) and 355-403 (GQSK…PQSQ). A compositionally biased stretch (basic and acidic residues) spans 19-34 (EYTEEQKQTLEQEQKE). 2 stretches are compositionally biased toward polar residues: residues 355 to 380 (GQSK…QYKQ) and 387 to 403 (PTNQ…PQSQ).

The protein resides in the cytoplasm. The chain is Antigenic heat-stable 120 kDa protein (sca4) from Rickettsia conorii (strain ATCC VR-613 / Malish 7).